A 1240-amino-acid chain; its full sequence is Stress response protein NST1 (1240 aa).

A compositionally biased stretch (basic residues) spans 1 to 20 (MPPNSKSKRRKNKSKQHNKK). Positions 1–76 (MPPNSKSKRR…EPINTDDDKK (76 aa)) are disordered. Residues 25 to 34 (DPEQSINPTQ) are compositionally biased toward polar residues. Positions 39-48 (MEPELYHTES) are enriched in basic and acidic residues. Ser-266 is modified (phosphoserine). Disordered regions lie at residues 446-593 (SQSK…DRLE), 634-744 (EKRK…RIRE), 951-980 (EMES…RKSF), 998-1029 (DTSL…TAGN), and 1214-1240 (TATP…TQTS). Acidic residues predominate over residues 457-487 (SIYEDEDEEDYDDYSEYAEDSEEVSEYEGIE). Over residues 488-513 (AVEKPEHDEKSNGIRETLHLSYDHDH) the composition is skewed to basic and acidic residues. Residues 514–524 (KRQNHPHHHYH) show a composition bias toward basic residues. Acidic residues predominate over residues 558–587 (DILDGDEDEPEEEDENEGDDEEDTYDSGLD). The stretch at 616–777 (HEKQADNNRL…EDALRKQKLN (162 aa)) forms a coiled coil. Over residues 951–965 (EMESQAHKSSPQATM) the composition is skewed to polar residues.

This sequence belongs to the NST1 family. As to quaternary structure, interacts with MSL1.

The protein resides in the cytoplasm. Its function is as follows. With MSL1, acts as a negative regulator of salt tolerance. This chain is Stress response protein NST1 (NST1), found in Saccharomyces cerevisiae (strain ATCC 204508 / S288c) (Baker's yeast).